The following is a 550-amino-acid chain: Glucagon-like peptide 2 receptor (550 aa).

The Extracellular portion of the chain corresponds to 1–173 (MRPQPSPAVP…SFRQNVDHYA (173 aa)). 3 disulfides stabilise this stretch: Cys-83-Cys-105, Cys-96-Cys-137, and Cys-118-Cys-159. N-linked (GlcNAc...) asparagine glycosylation is found at Asn-97, Asn-113, Asn-148, and Asn-162. The chain crosses the membrane as a helical span at residues 174–198 (LLYTLQLMYTVGYSVSLISLFLALT). At 199 to 210 (LFLFLRKLHCTR) the chain is on the cytoplasmic side. A helical transmembrane segment spans residues 211–235 (NYIHMNLFASFILKVLAVLVKDMVS). Over 236–261 (HNSYSKRPDDESGWMSYLSETSVSCR) the chain is Extracellular. A helical membrane pass occupies residues 262–285 (SVQVLLHYFVGTNHLWLLVEGLYL). Over 286-299 (HTLLEPTVFPERRL) the chain is Cytoplasmic. A helical membrane pass occupies residues 300 to 321 (WPKYLVVGWAFPMLFVIPWGFA). The Extracellular portion of the chain corresponds to 322–339 (RAHLENTRCWATNGNLKI). The helical transmembrane segment at 340–362 (WWIIRGPMLLCVTVNFFIFLKIL) threads the bilayer. Residues 363-386 (KLLISKLKAHQMCFRDYKYRLAKS) lie on the Cytoplasmic side of the membrane. Residues 387–405 (TLLLIPLLGVHEVLFTFFP) form a helical membrane-spanning segment. The Extracellular portion of the chain corresponds to 406-417 (DDQVQGFSKRIR). Residues 418–438 (LFIQLTLSSVHGFLVALQYGF) traverse the membrane as a helical segment. Topologically, residues 439 to 550 (ANGEVKAELR…MEEILEESEI (112 aa)) are cytoplasmic.

This sequence belongs to the G-protein coupled receptor 2 family.

It is found in the cell membrane. Functionally, this is a receptor for glucagon-like peptide 2. The activity of this receptor is mediated by G proteins which activate adenylyl cyclase. This is Glucagon-like peptide 2 receptor (Glp2r) from Rattus norvegicus (Rat).